We begin with the raw amino-acid sequence, 157 residues long: MMEEIDRFQDPAAASISDRDCDAREEKQRELARKGSLKNGSMGSPVNQQPKKNNVMARTRLVVPNKGYSSLDQSPDEKPLVALDTDSDDDFDMSRYSSSGYSSAEQINQDLNIQLLKDGYRLDEIPDDEDLDLIPPKSVNPTCMCCQATSSTACHIQ.

Position 1 is an N-acetylmethionine (Met1). The disordered stretch occupies residues 1–103; the sequence is MMEEIDRFQD…SRYSSSGYSS (103 aa). A compositionally biased stretch (basic and acidic residues) spans 17-33; that stretch reads SDRDCDAREEKQRELAR. Over residues 38–52 the composition is skewed to polar residues; sequence KNGSMGSPVNQQPKK. Phosphoserine is present on residues Ser44 and Ser74. Thr85 is modified (phosphothreonine). Phosphoserine occurs at positions 87 and 94. Over residues 94 to 103 the composition is skewed to low complexity; that stretch reads SRYSSSGYSS.

This sequence belongs to the FAM219 family.

This Mus musculus (Mouse) protein is Protein FAM219A (Fam219a).